Reading from the N-terminus, the 218-residue chain is Ribonuclease HII (218 aa).

Residues 13-202 (DLVAGVDEVG…VRAAHEARAT (190 aa)) form the RNase H type-2 domain. A divalent metal cation-binding residues include aspartate 19, glutamate 20, and aspartate 111.

Belongs to the RNase HII family. Requires Mn(2+) as cofactor. Mg(2+) is required as a cofactor.

Its subcellular location is the cytoplasm. It catalyses the reaction Endonucleolytic cleavage to 5'-phosphomonoester.. Functionally, endonuclease that specifically degrades the RNA of RNA-DNA hybrids. The chain is Ribonuclease HII from Pseudomonas syringae pv. syringae (strain B728a).